The following is a 257-amino-acid chain: Imidazole glycerol phosphate synthase subunit HisF (257 aa).

Residues Asp11 and Asp130 contribute to the active site.

It belongs to the HisA/HisF family. Heterodimer of HisH and HisF.

The protein localises to the cytoplasm. The enzyme catalyses 5-[(5-phospho-1-deoxy-D-ribulos-1-ylimino)methylamino]-1-(5-phospho-beta-D-ribosyl)imidazole-4-carboxamide + L-glutamine = D-erythro-1-(imidazol-4-yl)glycerol 3-phosphate + 5-amino-1-(5-phospho-beta-D-ribosyl)imidazole-4-carboxamide + L-glutamate + H(+). Its pathway is amino-acid biosynthesis; L-histidine biosynthesis; L-histidine from 5-phospho-alpha-D-ribose 1-diphosphate: step 5/9. In terms of biological role, IGPS catalyzes the conversion of PRFAR and glutamine to IGP, AICAR and glutamate. The HisF subunit catalyzes the cyclization activity that produces IGP and AICAR from PRFAR using the ammonia provided by the HisH subunit. This Tolumonas auensis (strain DSM 9187 / NBRC 110442 / TA 4) protein is Imidazole glycerol phosphate synthase subunit HisF.